A 357-amino-acid polypeptide reads, in one-letter code: RNA 3'-terminal phosphate cyclase (357 aa).

ATP-binding positions include Q102 and H293–D296. The Tele-AMP-histidine intermediate role is filled by H319.

The protein belongs to the RNA 3'-terminal cyclase family. Type 1 subfamily.

It localises to the cytoplasm. The catalysed reaction is a 3'-end 3'-phospho-ribonucleotide-RNA + ATP = a 3'-end 2',3'-cyclophospho-ribonucleotide-RNA + AMP + diphosphate. Its function is as follows. Catalyzes the conversion of 3'-phosphate to a 2',3'-cyclic phosphodiester at the end of RNA. The mechanism of action of the enzyme occurs in 3 steps: (A) adenylation of the enzyme by ATP; (B) transfer of adenylate to an RNA-N3'P to produce RNA-N3'PP5'A; (C) and attack of the adjacent 2'-hydroxyl on the 3'-phosphorus in the diester linkage to produce the cyclic end product. The biological role of this enzyme is unknown but it is likely to function in some aspects of cellular RNA processing. The protein is RNA 3'-terminal phosphate cyclase of Desulfurococcus amylolyticus (strain DSM 18924 / JCM 16383 / VKM B-2413 / 1221n) (Desulfurococcus kamchatkensis).